A 214-amino-acid chain; its full sequence is RNA pyrophosphohydrolase (214 aa).

A Nudix hydrolase domain is found at 6–149 (GFRPNVGIIL…KRDVYQLALT (144 aa)). A Nudix box motif is present at residues 38-59 (GGIKYGETPMQAMYRELHEETG).

It belongs to the Nudix hydrolase family. RppH subfamily. Requires a divalent metal cation as cofactor.

Its function is as follows. Accelerates the degradation of transcripts by removing pyrophosphate from the 5'-end of triphosphorylated RNA, leading to a more labile monophosphorylated state that can stimulate subsequent ribonuclease cleavage. The protein is RNA pyrophosphohydrolase of Burkholderia cenocepacia (strain HI2424).